The chain runs to 214 residues: Small ribosomal subunit protein eS6 (214 aa).

The protein belongs to the eukaryotic ribosomal protein eS6 family.

The chain is Small ribosomal subunit protein eS6 (rps6e) from Saccharolobus islandicus (strain Y.G.57.14 / Yellowstone #1) (Sulfolobus islandicus).